The following is a 527-amino-acid chain: Mitogen-activated protein kinase kinae MKK2 (527 aa).

Disordered stretches follow at residues 1–143 and 156–189; these read MHDQ…SAGS and IGSTRPQGTPDPASAVGSIYSERSDGGAGMDKDG. Over residues 107–129 the composition is skewed to low complexity; it reads QQGQSASGGSESSAAHSRSGSFG. Residues 134–143 are compositionally biased toward polar residues; the sequence is RTSNPTSAGS. Residues 177–189 are compositionally biased toward basic and acidic residues; that stretch reads ERSDGGAGMDKDG. In terms of domain architecture, Protein kinase spans 227–497; it reads IVELGGLGEG…PWRMLEHPWM (271 aa). ATP contacts are provided by residues 233–241 and lysine 256; that span reads LGEGAGGAV.

The protein belongs to the protein kinase superfamily. STE Ser/Thr protein kinase family. MAP kinase kinase subfamily. As to quaternary structure, interacts with the adapter protein MST50.

It catalyses the reaction L-seryl-[protein] + ATP = O-phospho-L-seryl-[protein] + ADP + H(+). The enzyme catalyses L-threonyl-[protein] + ATP = O-phospho-L-threonyl-[protein] + ADP + H(+). Mitogen-activated protein kinase kinase; part of the MCK1-MKK2-MPS1 MAP kinase (MAPK) signal transduction cascade that is essential for appressorium formation, penetration and invasive growth. Beside its role in pathogenesis, the MPS1 cascade is active in conidiation and cellular stress responses. Targets downstream of the the MPS1-MAPK pathway include transcription factors MIG1 and SWI6, as well as GSK1 and MPG1. The protein is Mitogen-activated protein kinase kinae MKK2 of Pyricularia oryzae (strain 70-15 / ATCC MYA-4617 / FGSC 8958) (Rice blast fungus).